The sequence spans 474 residues: GTPase Der (474 aa).

EngA-type G domains lie at 3–167 and 204–379; these read FTVA…GVDR and LRVA…MVWN. Residues 9 to 16, 56 to 60, 119 to 122, 210 to 217, 257 to 261, and 322 to 325 contribute to the GTP site; these read GRPNVGKS, DTAGL, NKSE, GRPNAGKS, DTAGM, and NKWD. The KH-like domain occupies 380-464; the sequence is KRISTAKLNR…PIRIHLKASE (85 aa).

This sequence belongs to the TRAFAC class TrmE-Era-EngA-EngB-Septin-like GTPase superfamily. EngA (Der) GTPase family. As to quaternary structure, associates with the 50S ribosomal subunit.

GTPase that plays an essential role in the late steps of ribosome biogenesis. This is GTPase Der from Allorhizobium ampelinum (strain ATCC BAA-846 / DSM 112012 / S4) (Agrobacterium vitis (strain S4)).